A 685-amino-acid polypeptide reads, in one-letter code: Sorbicillinoid biosynthetic cluster transcription factor sor4 (685 aa).

A compositionally biased stretch (low complexity) spans 1 to 14; the sequence is MGSSATATTTGEST. The disordered stretch occupies residues 1 to 20; the sequence is MGSSATATTTGESTRQQPGL. A DNA-binding region (zn(2)-C6 fungal-type) is located at residues 22–49; sequence CEECRRRKARCDRVRPKCGICADSGRNC. Positions 81–112 are disordered; sequence GQNDAPSLPQERDSLGCPTPSEKVSPEGDLVS.

It is found in the nucleus. In terms of biological role, transcription factor that acts as the main regulator of the gene cluster that mediates the biosynthesis of sorbicillinoids, a diverse group of yellow secondary metabolites that restrict growth of competing pathogenic fungi but not of bacteria. This Hypocrea jecorina (strain QM6a) (Trichoderma reesei) protein is Sorbicillinoid biosynthetic cluster transcription factor sor4.